A 716-amino-acid chain; its full sequence is MASVDPSRSFVRDVKRVIIKVGTAVVSRQDGRLALGRVGALCEQVKELNSLGYEVILVTSGAVGVGRQRLRYRKLVNSSFADLQKPQMELDGKACAAVGQSGLMALYDMLFNQLDVSSSQLLVTDSDFENPKFREQLTETVESLLDLKVIPIFNENDAISTRKAPYEDSSGIFWDNDSLAGLLALELKADLLILLSDVDGLYSGPPSEPSSKIIHTYIKEKHQQEITFGDKSRVGRGGMTAKVKAAVLASNSGTPVVITSGFENRSILKVLHGEKIGTLFHKNANLWESSKDVSTREMAVAARDCSRHLQNLSSEERKKILLDVADALEANEDLIRSENEADVAAAQVAGYEKPLVARLTIKPGKIASLAKSIRTLANMEDPINQILKKTEVADDLVLEKTSCPLGVLLIVFESRPDALVQIASLAIRSGNGLLLKGGKEAIRSNTILHKVITDAIPRNVGEKLIGLVTTRDEIADLLKLDDVIDLVIPRGSNKLVSQIKASTKIPVLGHADGICHVYIDKSADMDMAKHIVMDAKIDYPAACNAMETLLVHKDLMKSPGLDDILVALKTEGVNIYGGPIAHKALGFPKAVSFHHEYSSMACTVEFVDDVQSAIDHIHRYGSAHTDCIVTTDDKVAETFLRRVDSAAVFHNASTRFSDGARFGLGAEVGISTGRIHARGPVGVEGLLTTRWILRGRGQVVNGDKDVVYTHKSLPLQ.

Positions 1–296 (MASVDPSRSF…WESSKDVSTR (296 aa)) are glutamate 5-kinase. Substrate is bound by residues Ser-60, Asp-157, and Asn-176. ATP contacts are provided by residues 196-197 (SD), 202-207 (YSGPPS), and 236-242 (RGGMTAK). The gamma-glutamyl phosphate reductase stretch occupies residues 297–716 (EMAVAARDCS…VYTHKSLPLQ (420 aa)).

In the N-terminal section; belongs to the glutamate 5-kinase family. This sequence in the C-terminal section; belongs to the gamma-glutamyl phosphate reductase family. In terms of tissue distribution, expressed at high levels in leaves.

It catalyses the reaction L-glutamate + ATP = L-glutamyl 5-phosphate + ADP. The enzyme catalyses L-glutamate 5-semialdehyde + phosphate + NADP(+) = L-glutamyl 5-phosphate + NADPH + H(+). The protein operates within amino-acid biosynthesis; L-proline biosynthesis; L-glutamate 5-semialdehyde from L-glutamate: step 1/2. It participates in amino-acid biosynthesis; L-proline biosynthesis; L-glutamate 5-semialdehyde from L-glutamate: step 2/2. Feedback regulated by proline. P5CS plays a key role in proline biosynthesis, leading to osmoregulation in plants. Involved in abiotic stress tolerance. The protein is Delta-1-pyrroline-5-carboxylate synthase 1 of Oryza sativa subsp. japonica (Rice).